The following is a 441-amino-acid chain: Tubulin beta chain (441 aa).

The GTP site is built by Gln-11, Glu-69, Ser-138, Gly-142, Thr-143, Gly-144, Asn-204, and Asn-226. Glu-69 is a Mg(2+) binding site.

It belongs to the tubulin family. In terms of assembly, dimer of alpha and beta chains. A typical microtubule is a hollow water-filled tube with an outer diameter of 25 nm and an inner diameter of 15 nM. Alpha-beta heterodimers associate head-to-tail to form protofilaments running lengthwise along the microtubule wall with the beta-tubulin subunit facing the microtubule plus end conferring a structural polarity. Microtubules usually have 13 protofilaments but different protofilament numbers can be found in some organisms and specialized cells. It depends on Mg(2+) as a cofactor.

The protein localises to the cytoplasm. Its subcellular location is the cytoskeleton. Its function is as follows. Tubulin is the major constituent of microtubules, a cylinder consisting of laterally associated linear protofilaments composed of alpha- and beta-tubulin heterodimers. Microtubules grow by the addition of GTP-tubulin dimers to the microtubule end, where a stabilizing cap forms. Below the cap, tubulin dimers are in GDP-bound state, owing to GTPase activity of alpha-tubulin. In Babesia bovis, this protein is Tubulin beta chain.